The sequence spans 58 residues: Large ribosomal subunit protein bL32c (58 aa).

Disordered stretches follow at residues 1-21 and 34-58; these read MAVP…SQWM and LAGR…MQPN. The segment covering 44–58 has biased composition (low complexity); the sequence is QMQPTQMQPTQMQPN.

This sequence belongs to the bacterial ribosomal protein bL32 family.

It is found in the plastid. It localises to the chloroplast. This Cyanidioschyzon merolae (strain NIES-3377 / 10D) (Unicellular red alga) protein is Large ribosomal subunit protein bL32c.